Consider the following 304-residue polypeptide: Aspartate carbamoyltransferase catalytic subunit (304 aa).

Carbamoyl phosphate-binding residues include Arg49 and Thr50. Lys77 contacts L-aspartate. Residues Arg99, His127, and Gln130 each contribute to the carbamoyl phosphate site. L-aspartate contacts are provided by Arg160 and Arg211. The carbamoyl phosphate site is built by Ala252 and Pro253.

The protein belongs to the aspartate/ornithine carbamoyltransferase superfamily. ATCase family. Heterododecamer (2C3:3R2) of six catalytic PyrB chains organized as two trimers (C3), and six regulatory PyrI chains organized as three dimers (R2).

It carries out the reaction carbamoyl phosphate + L-aspartate = N-carbamoyl-L-aspartate + phosphate + H(+). The protein operates within pyrimidine metabolism; UMP biosynthesis via de novo pathway; (S)-dihydroorotate from bicarbonate: step 2/3. Its function is as follows. Catalyzes the condensation of carbamoyl phosphate and aspartate to form carbamoyl aspartate and inorganic phosphate, the committed step in the de novo pyrimidine nucleotide biosynthesis pathway. The protein is Aspartate carbamoyltransferase catalytic subunit of Bacillus cereus (strain ZK / E33L).